Here is a 34-residue protein sequence, read N- to C-terminus: Photosystem II reaction center protein M (34 aa).

The helical transmembrane segment at 5–25 (ILAFIATALFILIPTAFLLII) threads the bilayer.

This sequence belongs to the PsbM family. As to quaternary structure, PSII is composed of 1 copy each of membrane proteins PsbA, PsbB, PsbC, PsbD, PsbE, PsbF, PsbH, PsbI, PsbJ, PsbK, PsbL, PsbM, PsbT, PsbX, PsbY, PsbZ, Psb30/Ycf12, at least 3 peripheral proteins of the oxygen-evolving complex and a large number of cofactors. It forms dimeric complexes.

The protein localises to the plastid. It is found in the chloroplast thylakoid membrane. One of the components of the core complex of photosystem II (PSII). PSII is a light-driven water:plastoquinone oxidoreductase that uses light energy to abstract electrons from H(2)O, generating O(2) and a proton gradient subsequently used for ATP formation. It consists of a core antenna complex that captures photons, and an electron transfer chain that converts photonic excitation into a charge separation. This subunit is found at the monomer-monomer interface. This Agrostis stolonifera (Creeping bentgrass) protein is Photosystem II reaction center protein M.